The chain runs to 480 residues: MFS-type transporter oryF (480 aa).

Basic and acidic residues predominate over residues 1–10 (MAEEVNERTR). Residues 1-24 (MAEEVNERTRLLSQSDDPSPSLEE) form a disordered region. A compositionally biased stretch (low complexity) spans 11 to 22 (LLSQSDDPSPSL). Helical transmembrane passes span 41 to 61 (LCIA…AIIV), 81 to 101 (AFVS…GPLS), 107 to 127 (ISLL…CAFA), 138 to 158 (FITG…IGDL), 170 to 190 (LYTL…AYIV), 197 to 217 (AIFA…LCTL), 264 to 284 (FLGT…LFGL), 308 to 328 (ALNY…TGSL), 351 to 371 (ILML…GWSA), 378 to 398 (IMPN…YQCI), 415 to 435 (GALT…APLI), and 443 to 463 (WGSS…PILL).

This sequence belongs to the major facilitator superfamily.

The protein localises to the membrane. MFS-type transporter; part of the gene cluster that mediates the biosynthesis of oryzines, natural products with an unusual maleidride backbone. In Aspergillus oryzae (strain ATCC 42149 / RIB 40) (Yellow koji mold), this protein is MFS-type transporter oryF.